A 244-amino-acid polypeptide reads, in one-letter code: 7-cyano-7-deazaguanine synthase (244 aa).

14-24 (FSGGQDSATCV) lines the ATP pocket. The Zn(2+) site is built by C202, C217, C220, and C223.

The protein belongs to the QueC family. It depends on Zn(2+) as a cofactor.

The enzyme catalyses 7-carboxy-7-deazaguanine + NH4(+) + ATP = 7-cyano-7-deazaguanine + ADP + phosphate + H2O + H(+). The protein operates within purine metabolism; 7-cyano-7-deazaguanine biosynthesis. Catalyzes the ATP-dependent conversion of 7-carboxy-7-deazaguanine (CDG) to 7-cyano-7-deazaguanine (preQ(0)). The polypeptide is 7-cyano-7-deazaguanine synthase (Burkholderia cenocepacia (strain ATCC BAA-245 / DSM 16553 / LMG 16656 / NCTC 13227 / J2315 / CF5610) (Burkholderia cepacia (strain J2315))).